Here is a 348-residue protein sequence, read N- to C-terminus: Rhodopsin (348 aa).

Met1 is modified (N-acetylmethionine). The Extracellular segment spans residues 1–36; sequence MNGTEGPNFYVPFSNATGVVRSPFEYPQYYLAEPWQ. 2 N-linked (GlcNAc...) asparagine glycosylation sites follow: Asn2 and Asn15. The chain crosses the membrane as a helical span at residues 37–61; it reads FSMLAAYMFLLIVLGFPINFLTLYV. At 62 to 73 the chain is on the cytoplasmic side; it reads TVQHKKLRTPLN. Residues 74 to 96 traverse the membrane as a helical segment; it reads YILLNLAVADLFMVFGGFTTTLY. The Extracellular portion of the chain corresponds to 97–110; it reads TSLHGYFVFGPTGC. A disulfide bridge connects residues Cys110 and Cys187. A helical membrane pass occupies residues 111-133; that stretch reads NLEGFFATLGGEIALWSLVVLAI. Residues 134 to 136 carry the 'Ionic lock' involved in activated form stabilization motif; the sequence is ERY. The Cytoplasmic portion of the chain corresponds to 134 to 152; it reads ERYVVICKPMSNFRFGENH. A helical membrane pass occupies residues 153–173; the sequence is AIMGVVFTWIMALACAAPPLV. At 174–202 the chain is on the extracellular side; that stretch reads GWSRYIPEGMQCSCGVDYYTLKPEVNNES. Glu201 lines the Zn(2+) pocket. A helical transmembrane segment spans residues 203–224; it reads FVIYMFVVHFTIPLIVIFFCYG. At 225-252 the chain is on the cytoplasmic side; it reads QLVFTVKEAAAQQQESATTQKAEKEVTR. A helical transmembrane segment spans residues 253–274; that stretch reads MVILMVVFFLICWFPYAGVAFY. The Extracellular portion of the chain corresponds to 275–286; the sequence is IFTHQGSNFGPI. Gln279 contacts Zn(2+). The helical transmembrane segment at 287 to 308 threads the bilayer; sequence FMTLPAFFAKSSSIYNPVIYIM. Lys296 is modified (N6-(retinylidene)lysine). Topologically, residues 309–348 are cytoplasmic; the sequence is MNKQFRNCMLTTLCCGKNILGDDEASATASKTETSQVAPA. 2 S-palmitoyl cysteine lipidation sites follow: Cys322 and Cys323. Residues 330–348 are interaction with SAG; that stretch reads DDEASATASKTETSQVAPA. Ser334 carries the phosphoserine modification. A Phosphothreonine modification is found at Thr336. Ser338 carries the post-translational modification Phosphoserine. Residues Thr340 and Thr342 each carry the phosphothreonine modification. Ser343 carries the post-translational modification Phosphoserine.

It belongs to the G-protein coupled receptor 1 family. Opsin subfamily. As to quaternary structure, homodimer. May form a complex composed of RHO, GRK1 and RCVRN in a Ca(2+)-dependent manner; RCVRN prevents the interaction between GRK1 and RHO. Interacts with GRK1. Interacts (phosphorylated form) with SAG. Interacts with GNAT1. Interacts with GNAT3. SAG and G-proteins compete for a common binding site. Interacts with PRCD; the interaction promotes PRCD stability. Forms a complex with ASAP1 and ARF4. Forms a complex with ASAP1, RAB11A, Rabin8/RAB3IP, ARF4 and RAB11FIP3; the complex regulates Golgi-to-cilia rhodopsin/RHO transport in photoreceptors. In terms of processing, phosphorylated on some or all of the serine and threonine residues present in the C-terminal region. Post-translationally, contains one covalently linked retinal chromophore. Upon light absorption, the covalently bound 11-cis-retinal is converted to all-trans-retinal. After hydrolysis of the Schiff base and release of the covalently bound all-trans-retinal, active rhodopsin is regenerated by binding of a fresh molecule of 11-cis-retinal.

Its subcellular location is the membrane. It localises to the cell projection. The protein localises to the cilium. It is found in the photoreceptor outer segment. Its function is as follows. Photoreceptor required for image-forming vision at low light intensity. Required for photoreceptor cell viability after birth. Light-induced isomerization of 11-cis to all-trans retinal triggers a conformational change that activates signaling via G-proteins. Subsequent receptor phosphorylation mediates displacement of the bound G-protein alpha subunit by the arrestin SAG and terminates signaling. The polypeptide is Rhodopsin (RHO) (Cricetulus griseus (Chinese hamster)).